Consider the following 156-residue polypeptide: Small ribosomal subunit protein uS7 (156 aa).

It belongs to the universal ribosomal protein uS7 family. As to quaternary structure, part of the 30S ribosomal subunit. Contacts proteins S9 and S11.

In terms of biological role, one of the primary rRNA binding proteins, it binds directly to 16S rRNA where it nucleates assembly of the head domain of the 30S subunit. Is located at the subunit interface close to the decoding center, probably blocks exit of the E-site tRNA. The polypeptide is Small ribosomal subunit protein uS7 (Paramagnetospirillum magneticum (strain ATCC 700264 / AMB-1) (Magnetospirillum magneticum)).